A 269-amino-acid polypeptide reads, in one-letter code: Formamidopyrimidine-DNA glycosylase (269 aa).

The active-site Schiff-base intermediate with DNA is proline 2. Glutamate 3 acts as the Proton donor in catalysis. The active-site Proton donor; for beta-elimination activity is the lysine 57. DNA contacts are provided by histidine 90, arginine 109, and arginine 150. An FPG-type zinc finger spans residues 235–269 (NVYGRKGEPCEACGKAIESKVIGQRNTFFCTRCQR). Residue arginine 259 is the Proton donor; for delta-elimination activity of the active site.

The protein belongs to the FPG family. In terms of assembly, monomer. Zn(2+) serves as cofactor.

The catalysed reaction is Hydrolysis of DNA containing ring-opened 7-methylguanine residues, releasing 2,6-diamino-4-hydroxy-5-(N-methyl)formamidopyrimidine.. It carries out the reaction 2'-deoxyribonucleotide-(2'-deoxyribose 5'-phosphate)-2'-deoxyribonucleotide-DNA = a 3'-end 2'-deoxyribonucleotide-(2,3-dehydro-2,3-deoxyribose 5'-phosphate)-DNA + a 5'-end 5'-phospho-2'-deoxyribonucleoside-DNA + H(+). In terms of biological role, involved in base excision repair of DNA damaged by oxidation or by mutagenic agents. Acts as a DNA glycosylase that recognizes and removes damaged bases. Has a preference for oxidized purines, such as 7,8-dihydro-8-oxoguanine (8-oxoG). Has AP (apurinic/apyrimidinic) lyase activity and introduces nicks in the DNA strand. Cleaves the DNA backbone by beta-delta elimination to generate a single-strand break at the site of the removed base with both 3'- and 5'-phosphates. The sequence is that of Formamidopyrimidine-DNA glycosylase from Alteromonas mediterranea (strain DSM 17117 / CIP 110805 / LMG 28347 / Deep ecotype).